Consider the following 331-residue polypeptide: Bifunctional nuclease (331 aa).

A BFN domain is found at 126 to 261 (CVQNNPRVLR…RIAYNNGLKV (136 aa)). One can recognise a UVR domain in the interval 291–326 (EAQEFDLVRNMLVAAVEERYKDAAQYRDQLFMFRAK).

The protein belongs to the bifunctional nuclease family.

The protein resides in the nucleus. Functionally, bifunctional nuclease with both RNase and DNase activities. Involved in basal defense response. Participates in abscisic acid-derived callose deposition following infection by a necrotrophic pathogen. In Oryza minuta, this protein is Bifunctional nuclease (BBD).